Reading from the N-terminus, the 195-residue chain is Dephospho-CoA kinase (195 aa).

Residues Ile2–Ser195 form the DPCK domain. Gly10–Phe15 provides a ligand contact to ATP.

The protein belongs to the CoaE family.

The protein resides in the cytoplasm. The enzyme catalyses 3'-dephospho-CoA + ATP = ADP + CoA + H(+). The protein operates within cofactor biosynthesis; coenzyme A biosynthesis; CoA from (R)-pantothenate: step 5/5. In terms of biological role, catalyzes the phosphorylation of the 3'-hydroxyl group of dephosphocoenzyme A to form coenzyme A. The polypeptide is Dephospho-CoA kinase (Wolbachia sp. subsp. Brugia malayi (strain TRS)).